The following is a 1215-amino-acid chain: Zinc finger SWIM domain-containing protein 6 (1215 aa).

Disordered regions lie at residues 1–46 and 133–161; these read MAER…RPGP and AAGG…SPAA. Gly residues-rich tracts occupy residues 18-38 and 133-155; these read PGGG…GGGY and AAGG…GGGS. Residues 246–283 form an SWIM-type zinc finger; it reads CNVAISFDRCKITSVTCSCGNKDIFYCAHVVALSLYRI.

Functionally, involved in nervous system development, important for striatal morphology and motor regulation. The sequence is that of Zinc finger SWIM domain-containing protein 6 from Homo sapiens (Human).